The primary structure comprises 582 residues: 2-succinyl-5-enolpyruvyl-6-hydroxy-3-cyclohexene-1-carboxylate synthase (582 aa).

Belongs to the TPP enzyme family. MenD subfamily. In terms of assembly, homodimer. Requires Mg(2+) as cofactor. It depends on Mn(2+) as a cofactor. Thiamine diphosphate is required as a cofactor.

It catalyses the reaction isochorismate + 2-oxoglutarate + H(+) = 5-enolpyruvoyl-6-hydroxy-2-succinyl-cyclohex-3-ene-1-carboxylate + CO2. It functions in the pathway quinol/quinone metabolism; 1,4-dihydroxy-2-naphthoate biosynthesis; 1,4-dihydroxy-2-naphthoate from chorismate: step 2/7. Its pathway is cofactor biosynthesis; phylloquinone biosynthesis. Its function is as follows. Catalyzes the thiamine diphosphate-dependent decarboxylation of 2-oxoglutarate and the subsequent addition of the resulting succinic semialdehyde-thiamine pyrophosphate anion to isochorismate to yield 2-succinyl-5-enolpyruvyl-6-hydroxy-3-cyclohexene-1-carboxylate (SEPHCHC). This chain is 2-succinyl-5-enolpyruvyl-6-hydroxy-3-cyclohexene-1-carboxylate synthase, found in Synechococcus elongatus (strain ATCC 33912 / PCC 7942 / FACHB-805) (Anacystis nidulans R2).